Consider the following 103-residue polypeptide: Large ribosomal subunit protein uL24 (103 aa).

It belongs to the universal ribosomal protein uL24 family. In terms of assembly, part of the 50S ribosomal subunit.

In terms of biological role, one of two assembly initiator proteins, it binds directly to the 5'-end of the 23S rRNA, where it nucleates assembly of the 50S subunit. Its function is as follows. One of the proteins that surrounds the polypeptide exit tunnel on the outside of the subunit. The protein is Large ribosomal subunit protein uL24 of Sinorhizobium medicae (strain WSM419) (Ensifer medicae).